A 132-amino-acid chain; its full sequence is Small ribosomal subunit protein uS11 (132 aa).

This sequence belongs to the universal ribosomal protein uS11 family. As to quaternary structure, part of the 30S ribosomal subunit. Interacts with proteins S7 and S18. Binds to IF-3.

Located on the platform of the 30S subunit, it bridges several disparate RNA helices of the 16S rRNA. Forms part of the Shine-Dalgarno cleft in the 70S ribosome. This is Small ribosomal subunit protein uS11 from Alkaliphilus metalliredigens (strain QYMF).